Here is an 850-residue protein sequence, read N- to C-terminus: MLADVLRLGEARTVKQLSAIADHVDSLARGVENLTDAELSSRTDVFRRRVADGDVLDELLPEGFAVAREAAWRVLGLRPYHVQVMGGAALHFGNIAEMMTGEGKTLACVMPAYLNAIGGKGVHIVTVNDYLAGRDAEQMGRVHRFLGLTVGVILSEMKPDERRAAYAADITYGTNNEFGFDYLRDNMAGRLEDRVQRGHCYAIVDEVDSILIDEARTPMIISGPADDATRWYAEFARLAALMTRDVHYEVDTRRRTIGVSEAGVALVEDQLGVDNLYQVVHAPLVGHLNNAVRAKELFHRDREYIVNDDGEVLIVDEFTGRVLVGRRYNEGLHQAIEAKEGVEVKPENQTLATITLQNYFRLYDRLAGMTGTARSEASEFRDIYRLGVITIPPNRPVVRRDEVDVVYKTESAKFDAVVEDVVGRHAAGQPVLIGTTSVEKSEYLSGRLTERRVPHTVLNAKHLEQEAAIVAEGGRRGAVTVATDMAGRGTDIMLGGNVDFLTDKRLRSRGLHPTRSPEEYDAAWAEVRREVAAESRTEAREVVALGGLYVLGTERHESRRIDNQLRGRSGRQGDPGETRFYVSLCDELMRRSATFDLEKLMSRLKMPEREPIEAKVVSRAIRNAQSQVEQANFDMRRSVVKYGQVLDQQRRIVYQARSRLLEGEDMQHQIFHMIGDVVTAYVNECTAGRRTADWDLETLRAALSTLYPVVWQPDPRPHMRGLTRSVLRHEVIADARRALVRRKAAIEARSGLRVMRELERAILLDCLDSKWRAHLYEMDYLAAGIGMRALAGADPVVEYHREGHRMFVRMLEAVKEQSIRSLFDATTRMLAPIMPSAARSPGTPDPRWPF.

ATP is bound by residues glutamine 83, 101-105 (GEGKT), and aspartate 491.

This sequence belongs to the SecA family. Monomer and homodimer. Part of the essential Sec protein translocation apparatus which comprises SecA, SecYEG and auxiliary proteins SecDF. Other proteins may also be involved.

The protein localises to the cell membrane. The protein resides in the cytoplasm. The enzyme catalyses ATP + H2O + cellular proteinSide 1 = ADP + phosphate + cellular proteinSide 2.. In terms of biological role, part of the Sec protein translocase complex. Interacts with the SecYEG preprotein conducting channel. Has a central role in coupling the hydrolysis of ATP to the transfer of proteins into and across the cell membrane, serving as an ATP-driven molecular motor driving the stepwise translocation of polypeptide chains across the membrane. The protein is Protein translocase subunit SecA 2 of Mycolicibacterium vanbaalenii (strain DSM 7251 / JCM 13017 / BCRC 16820 / KCTC 9966 / NRRL B-24157 / PYR-1) (Mycobacterium vanbaalenii).